The chain runs to 206 residues: Geminin (206 aa).

The span at 1–18 (MNLSMKQKQEGAQENVKN) shows a compositional bias: polar residues. Residues 1-42 (MNLSMKQKQEGAQENVKNSPVPRRTLKMIQPSADGSLVGREN) are disordered. N6-acetyllysine is present on lysine 27. Residues serine 36, serine 63, and serine 64 each carry the phosphoserine modification. The tract at residues 79-158 (TQEAFDLISK…AEVIERLSNE (80 aa)) is necessary and sufficient for interaction with IDAS and CDT1. The stretch at 91 to 141 (PSSQYWKEVAEQRRKALYEALKENEKLHKEIEQKDSEIARLRKENKDLAEV) forms a coiled coil. Residues 157–206 (NEPLDNFESPDSQEFDSEEEAVEYSELEDSGAGTCAEETVSSSTDARPCT) form a disordered region. Positions 167–185 (DSQEFDSEEEAVEYSELED) are enriched in acidic residues. The interval 167 to 187 (DSQEFDSEEEAVEYSELEDSG) is homeodomain binding. At serine 181 the chain carries Phosphoserine; by CK2. Residues 195–206 (TVSSSTDARPCT) are compositionally biased toward polar residues.

It belongs to the geminin family. As to quaternary structure, homotetramer. Interacts with CDT1; this inhibits binding of the MCM complex to origins of replication. The complex with CDT1 exists in two forms, a 'permissive' heterotrimer and an 'inhibitory' heterohexamer. Interacts (via coiled-coil domain) with IDAS (via coiled-coil domain); this targets GMNN to the nucleus. The heterodimer formed by GMNN and MCIDAS has much lower affinity for CDT1 than the GMNN homodimer. Interacts with a subset of Hox proteins, affinity increasing from anterior to posterior types, the strongest interaction being with HOXB1, HOXC9 and HOXD10. Interacts with LRWD1 from G1/S to mitosis. Post-translationally, phosphorylated during mitosis. Phosphorylation at Ser-181 by CK2 results in enhanced binding to Hox proteins and more potent inhibitory effect on Hox transcriptional activity.

Its subcellular location is the cytoplasm. It is found in the nucleus. Its function is as follows. Inhibits DNA replication by preventing the incorporation of MCM complex into pre-replication complex (pre-RC). It is degraded during the mitotic phase of the cell cycle. Its destruction at the metaphase-anaphase transition permits replication in the succeeding cell cycle. Inhibits histone acetyltransferase activity of KAT7/HBO1 in a CDT1-dependent manner, inhibiting histone H4 acetylation and DNA replication licensing. Inhibits the transcriptional activity of a subset of Hox proteins, enrolling them in cell proliferative control. The sequence is that of Geminin (Gmnn) from Mus musculus (Mouse).